Consider the following 414-residue polypeptide: Enterobactin exporter EntS (414 aa).

At 1–21 (MNRQSWLLNLSLLKTHPAFRA) the chain is on the cytoplasmic side. A helical membrane pass occupies residues 22-42 (VFLARFISIVSLGLLGVAVPV). The Periplasmic portion of the chain corresponds to 43–55 (QIQMMTHSTWQVG). The helical transmembrane segment at 56-76 (LSVTLTGGAMFIGLMVGGVLA) threads the bilayer. The Cytoplasmic segment spans residues 77 to 83 (DRYERKK). Residues 84 to 104 (VILLARGTCGIGFIGLCVNSL) traverse the membrane as a helical segment. The Periplasmic portion of the chain corresponds to 105-109 (LPEPS). The chain crosses the membrane as a helical span at residues 110–130 (LLAIYLLGLWDGFFASLGVTA). Residues 131 to 156 (LLAATPALVGRENLMQAGAITMLTVR) lie on the Cytoplasmic side of the membrane. Residues 157–177 (LGSVISPMLGGILLASGGVAW) form a helical membrane-spanning segment. Position 178 (Asn-178) is a topological domain, periplasmic. Residues 179 to 199 (YGLAAAGTFITLLPLLTLPRL) traverse the membrane as a helical segment. Over 200–218 (PVPPQPRENPFIALLAAFR) the chain is Cytoplasmic. A helical transmembrane segment spans residues 219–239 (FLLASPLIGGIALLGGLVTMA). Residues 240–256 (SAVRVLYPALAMSWQMS) lie on the Periplasmic side of the membrane. A helical transmembrane segment spans residues 257–277 (AAQIGLLYAAIPLGAAIGALT). Residues 278 to 287 (SGQLAHSVRP) lie on the Cytoplasmic side of the membrane. A helical membrane pass occupies residues 288-307 (GLIMLVSTVGSFLAVGLFAI). Topologically, residues 308-313 (MPVWTA) are periplasmic. Residues 314-336 (GVICLALFGWLSAISSLLQYTLL) traverse the membrane as a helical segment. Over 337–356 (QTQTPENMLGRMNGLWTAQN) the chain is Cytoplasmic. A helical membrane pass occupies residues 357–377 (VTGDAIGAALLGGLGAMMTPV). Position 378 (Ala-378) is a topological domain, periplasmic. The helical transmembrane segment at 379–399 (SASVSGFGLVIIGLLLLLVLG) threads the bilayer. Residues 400–414 (ELRRFRQTPPVSDAG) are Cytoplasmic-facing.

The protein belongs to the major facilitator superfamily. EntS (TC 2.A.1.38) family.

The protein resides in the cell inner membrane. Its function is as follows. Component of an export pathway for enterobactin. The polypeptide is Enterobactin exporter EntS (Salmonella choleraesuis (strain SC-B67)).